We begin with the raw amino-acid sequence, 764 residues long: Chloride anion exchanger (764 aa).

The Cytoplasmic portion of the chain corresponds to 1 to 76 (MIEPFGNQYI…YRLKEWLLSD (76 aa)). A helical transmembrane segment spans residues 77-97 (IVSGISTGIVAVLQGLAFALL). Residues 98 to 99 (VD) are Extracellular-facing. Residues 100–120 (IPPVYGLYASFFPAIIYLFFG) traverse the membrane as a helical segment. Residues 121–124 (TSRH) are Cytoplasmic-facing. The helical transmembrane segment at 125–145 (ISVGPFPILSMMVGLAVSGAV) threads the bilayer. Residues 146 to 175 (SKAVPDRNATTLGLPNNSNNSSLLDDERVR) are Extracellular-facing. 3 N-linked (GlcNAc...) asparagine glycosylation sites follow: asparagine 153, asparagine 161, and asparagine 165. Residues 176-196 (VAAAASVTVLSGIIQLAFGIL) form a helical membrane-spanning segment. Residue arginine 197 is a topological domain, cytoplasmic. A helical membrane pass occupies residues 198–218 (IGFVVIYLSESLISGFTTAAA). Topologically, residues 219 to 257 (VHVLVSQLKFIFQLTVPSHTDPVSIFKVLYSVFSQIEKT) are extracellular. A helical membrane pass occupies residues 258-278 (NIADLVTALIVLLVVSIVKEI). The Cytoplasmic segment spans residues 279-342 (NQRFKDKLPV…VETFQNTVGD (64 aa)). Residues 343–363 (CFGIAMVAFAVAFSVASVYSL) form a helical membrane-spanning segment. The Extracellular portion of the chain corresponds to 364–374 (KYDYPLDGNQE). A helical transmembrane segment spans residues 375 to 395 (LIALGLGNIVCGVFRGFAGST). Residues 396–411 (ALSRSAVQESTGGKTQ) lie on the Cytoplasmic side of the membrane. The helical transmembrane segment at 412–432 (IAGLIGAIIVLIVVLAIGFLL) threads the bilayer. At 433–469 (APLQKSVLAALALGNLKGMLMQFAEIGRLWRKDKYDC) the chain is on the extracellular side. The chain crosses the membrane as a helical span at residues 470 to 490 (LIWIMTFIFTIVLGLGLGLAA). Residues 491-701 (SVAFQLLTIV…EKLNRYEFFD (211 aa)) are Cytoplasmic-facing. One can recognise an STAS domain in the interval 525–720 (DYYDMYEPEG…LTIHDAVLHI (196 aa)). The PDZ-binding motif lies at 761–764 (ETKF).

The protein belongs to the SLC26A/SulP transporter (TC 2.A.53) family. As to quaternary structure, interacts with CFTR, SLC26A6 and NHERF1. Interacts with PDZK1. Interacts (via PDZ-binding motif) with NHERF4 (via the third PDZ domain); interaction leads to decreased expression of SLC26A3 on the cell membrane resulting in its reduced exchanger activity. In terms of processing, N-glycosylation is required for efficient cell surface expression, and protection from proteolytic degradation. In terms of tissue distribution, expressed in the colon. Expression is significantly decreased in adenomas (polyps) and adenocarcinomas of the colon.

Its subcellular location is the apical cell membrane. The protein localises to the membrane. It is found in the cell membrane. It carries out the reaction hydrogencarbonate(in) + 2 chloride(out) = hydrogencarbonate(out) + 2 chloride(in). Inhibited by acidic pH. In terms of biological role, mediates chloride-bicarbonate exchange with a chloride bicarbonate stoichiometry of 2:1 in the intestinal epithelia. Plays a role in the chloride and bicarbonate homeostasis during sperm epididymal maturation and capacitation. The polypeptide is Chloride anion exchanger (SLC26A3) (Homo sapiens (Human)).